We begin with the raw amino-acid sequence, 159 residues long: SsrA-binding protein (159 aa).

Over residues 140-150 (RATEKERDWNR) the composition is skewed to basic and acidic residues. The segment at 140 to 159 (RATEKERDWNRQKQRVLRQR) is disordered.

The protein belongs to the SmpB family.

It is found in the cytoplasm. In terms of biological role, required for rescue of stalled ribosomes mediated by trans-translation. Binds to transfer-messenger RNA (tmRNA), required for stable association of tmRNA with ribosomes. tmRNA and SmpB together mimic tRNA shape, replacing the anticodon stem-loop with SmpB. tmRNA is encoded by the ssrA gene; the 2 termini fold to resemble tRNA(Ala) and it encodes a 'tag peptide', a short internal open reading frame. During trans-translation Ala-aminoacylated tmRNA acts like a tRNA, entering the A-site of stalled ribosomes, displacing the stalled mRNA. The ribosome then switches to translate the ORF on the tmRNA; the nascent peptide is terminated with the 'tag peptide' encoded by the tmRNA and targeted for degradation. The ribosome is freed to recommence translation, which seems to be the essential function of trans-translation. The polypeptide is SsrA-binding protein (Alcanivorax borkumensis (strain ATCC 700651 / DSM 11573 / NCIMB 13689 / SK2)).